Reading from the N-terminus, the 474-residue chain is tRNA-2-methylthio-N(6)-dimethylallyladenosine synthase (474 aa).

Residues Lys3–Ser120 enclose the MTTase N-terminal domain. 6 residues coordinate [4Fe-4S] cluster: Cys12, Cys49, Cys83, Cys157, Cys161, and Cys164. The Radical SAM core domain maps to Arg143–Arg375. The region spanning Arg378–Arg441 is the TRAM domain.

This sequence belongs to the methylthiotransferase family. MiaB subfamily. As to quaternary structure, monomer. [4Fe-4S] cluster serves as cofactor.

It localises to the cytoplasm. The catalysed reaction is N(6)-dimethylallyladenosine(37) in tRNA + (sulfur carrier)-SH + AH2 + 2 S-adenosyl-L-methionine = 2-methylsulfanyl-N(6)-dimethylallyladenosine(37) in tRNA + (sulfur carrier)-H + 5'-deoxyadenosine + L-methionine + A + S-adenosyl-L-homocysteine + 2 H(+). Its function is as follows. Catalyzes the methylthiolation of N6-(dimethylallyl)adenosine (i(6)A), leading to the formation of 2-methylthio-N6-(dimethylallyl)adenosine (ms(2)i(6)A) at position 37 in tRNAs that read codons beginning with uridine. This chain is tRNA-2-methylthio-N(6)-dimethylallyladenosine synthase, found in Vibrio vulnificus (strain YJ016).